The chain runs to 504 residues: Ribose import ATP-binding protein RbsA 3 (504 aa).

2 consecutive ABC transporter domains span residues 6–238 and 251–494; these read ANLK…VGRP and IGAE…MMGG. 38–45 serves as a coordination point for ATP; sequence GENGAGKS.

It belongs to the ABC transporter superfamily. Ribose importer (TC 3.A.1.2.1) family. As to quaternary structure, the complex is composed of an ATP-binding protein (RbsA), two transmembrane proteins (RbsC) and a solute-binding protein (RbsB).

Its subcellular location is the cell inner membrane. It catalyses the reaction D-ribose(out) + ATP + H2O = D-ribose(in) + ADP + phosphate + H(+). Its function is as follows. Part of the ABC transporter complex RbsABC involved in ribose import. Responsible for energy coupling to the transport system. The sequence is that of Ribose import ATP-binding protein RbsA 3 from Rhizobium meliloti (strain 1021) (Ensifer meliloti).